The chain runs to 1001 residues: Ulvan lyase, long isoform (1001 aa).

A signal peptide spans 1 to 21 (MNGLKMLLFSTTLLTAFTLHA). Residue 126–127 (SH) participates in substrate binding. The active-site Proton donor/acceptor is histidine 127. Positions 189, 199, and 201 each coordinate Ca(2+). 2 residues coordinate substrate: tyrosine 280 and arginine 297. The Ca(2+) site is built by aspartate 300, aspartate 303, and tyrosine 305. Substrate is bound at residue tyrosine 361.

Belongs to the polysaccharide lyase 24 family.

Functionally, ulvan lyase involved in ulvan degradation. Ulvan is the main polysaccharide component of the Ulvales (green seaweed) cell wall. It is composed of disaccharide building blocks comprising 3-sulfated rhamnose (Rha3S) linked to D-glucuronic acid (GlcA), L-iduronic acid (IduA), or D-xylose (Xyl). Ulvan lyase catalyzes preferentially the endolytic cleavage of the glycosidic bond between Rha3S and the uronic acid GlcA, but not IduA, producing oligosaccharides that have unsaturated 4-deoxy-L-threo-hex-4-enopyranosiduronic acid (deltaUA) at the non-reducing end. The most abundant end products in the degradation of the ulvan polysaccharide were deltaUA-Rha3S disaccharides and deltaUA-Rha3S-IduA-Rha3S and deltaUA-Rha3S-Xyl-Rha3S tetrasaccharides. The chain is Ulvan lyase, long isoform from Pseudoalteromonas sp. (strain PLSV).